The primary structure comprises 417 residues: MIETLGVLLAGGAGERLYPLTRDRAKPAVNFGGIYRIIDITLSNCINSGLRRVYILTQYKALSLNRHIREGWSGIVGNELGEFIEILPPMKRVSENWYMGTADAVYQNIYSIGSEQPRYVLILSGDHIYKMNYDLMMRQHKDSGADVTLATILIDPSETRHFGVVDVDNQSHVNGFVEKPKSTELRSPYDPSKVSASMGIYIFNTDVLIPVLLKDAEDPNSKHDFGHNILPKMVGEYKIYSFNFIDENKKEALYWRDVGTLDAYYDANLDLVSVAPVFNLYDKAWPIRTHQRQYPPAKFVFAEQGRMGTALDSVVSMGCIVSGGTVRNCVLSPDVRVNSFSEVDSSILFSHVNVGRHCRIRRSIIDRDVHIPEGTVIGYDTESDRQKYHVTDSGITVVTRDYSLFENPVEVDYFTSE.

Residues Y98, G163, 178–179, and S197 each bind alpha-D-glucose 1-phosphate; that span reads EK.

It belongs to the bacterial/plant glucose-1-phosphate adenylyltransferase family. As to quaternary structure, homotetramer.

The catalysed reaction is alpha-D-glucose 1-phosphate + ATP + H(+) = ADP-alpha-D-glucose + diphosphate. It participates in glycan biosynthesis; glycogen biosynthesis. In terms of biological role, involved in the biosynthesis of ADP-glucose, a building block required for the elongation reactions to produce glycogen. Catalyzes the reaction between ATP and alpha-D-glucose 1-phosphate (G1P) to produce pyrophosphate and ADP-Glc. The chain is Glucose-1-phosphate adenylyltransferase from Koribacter versatilis (strain Ellin345).